The chain runs to 327 residues: Thioredoxin reductase sirT (327 aa).

Residues 15–18 (AGPA), 37–42 (DTGVFR), histidine 50, and alanine 115 contribute to the FAD site. A disulfide bridge links cysteine 139 with cysteine 142. FAD is bound by residues aspartate 289 and 296 to 297 (QV).

This sequence belongs to the class-II pyridine nucleotide-disulfide oxidoreductase family. As to quaternary structure, homodimer. FAD serves as cofactor.

It participates in mycotoxin biosynthesis. Functionally, thioredoxin reductase; part of the gene cluster that mediates the biosynthesis of sirodesmin PL, an epipolythiodioxopiperazine (ETP) characterized by a disulfide bridged cyclic dipeptide and that acts as a phytotoxin which is involved in the blackleg didease of canola. SirD catalyzes the O-prenylation of L-tyrosine (L-Tyr) in the presence of dimethylallyl diphosphate (DMAPP) to yield 4-O-dimethylallyl-L-Tyr, and therefore represents probably the first pathway-specific enzyme in the biosynthesis of sirodesmin PL. 4-O-dimethylallyl-L-Tyr, then undergoes condensation with L-Ser in a reaction catalyzed by the non-ribosomal peptide synthase sirP to form the diketopiperazine (DKP) backbone. Further bishydroxylation of the DKP performed by the cytochrome P450 monooxygenase sirC leads to the production of the intermediate phomamide. This step is essential to form the reactive thiol group required for toxicity of sirodesmin PL. The next steps of sirodesmin biosynthesis are not well understood yet, but some predictions could be made from intermediate compounds identification. Phomamide is converted into phomalizarine via oxidation, probably by sirT. Further oxidation, methylation (by sirM or sirN) and reduction steps convert phomalizarine to deacetyl sirodesmin. Finally, acetyltransferase sirH probably acetylates deacetyl sirodesmin to produce sirodesmin PL. The polypeptide is Thioredoxin reductase sirT (Leptosphaeria maculans (Blackleg fungus)).